A 445-amino-acid polypeptide reads, in one-letter code: Protein phosphatase 2C 53 (445 aa).

The 312-residue stretch at Leu124–Leu435 folds into the PPM-type phosphatase domain. Residues Asp180, Gly181, Asp362, and Asp426 each contribute to the Mn(2+) site.

Belongs to the PP2C family. As to quaternary structure, interacts with PYL10, SAPK8 and SAPK10. Binding to PYL10 is dependent on the presence of abscisic acid (ABA). Interacts with PYL3, PYL5, PYL9 and PYL10. Binding to PYL9 and PYL10 is dependent on the presence of ABA. Mg(2+) is required as a cofactor. Requires Mn(2+) as cofactor. In terms of tissue distribution, expressed in leaf blades, leaf sheaths and lamina joints. Expressed at low levels in roots, stems, flowers and panicles.

The protein localises to the cytoplasm. It is found in the cytosol. It localises to the nucleus. It catalyses the reaction O-phospho-L-seryl-[protein] + H2O = L-seryl-[protein] + phosphate. The enzyme catalyses O-phospho-L-threonyl-[protein] + H2O = L-threonyl-[protein] + phosphate. Its activity is regulated as follows. Repressed by abscisic acid-bound PYL1. Functionally, protein phosphatase that acts as a negative regulator of abscisic acid (ABA) signaling. Involved in the regulation of root architecture development and drought resistance. Can dephosphorylate SAPK8 and SAPK10 in vitro. Together with PYL10, SAPK8 and SAPK10, may form an ABA signaling module involved in stress response. This Oryza sativa subsp. japonica (Rice) protein is Protein phosphatase 2C 53.